The following is a 266-amino-acid chain: Tryptophan synthase alpha chain (266 aa).

Residues Glu-51 and Asp-62 each act as proton acceptor in the active site.

The protein belongs to the TrpA family. In terms of assembly, tetramer of two alpha and two beta chains.

The enzyme catalyses (1S,2R)-1-C-(indol-3-yl)glycerol 3-phosphate + L-serine = D-glyceraldehyde 3-phosphate + L-tryptophan + H2O. The protein operates within amino-acid biosynthesis; L-tryptophan biosynthesis; L-tryptophan from chorismate: step 5/5. In terms of biological role, the alpha subunit is responsible for the aldol cleavage of indoleglycerol phosphate to indole and glyceraldehyde 3-phosphate. The protein is Tryptophan synthase alpha chain of Prochlorococcus marinus (strain NATL1A).